The primary structure comprises 215 residues: LexA repressor (215 aa).

The segment at residues 28 to 48 is a DNA-binding region (H-T-H motif); it reads RAEIAAELGFSSPNAAEEHLR. Catalysis depends on for autocatalytic cleavage activity residues Ser-133 and Lys-170.

The protein belongs to the peptidase S24 family. Homodimer.

The enzyme catalyses Hydrolysis of Ala-|-Gly bond in repressor LexA.. Functionally, represses a number of genes involved in the response to DNA damage (SOS response), including recA and lexA. In the presence of single-stranded DNA, RecA interacts with LexA causing an autocatalytic cleavage which disrupts the DNA-binding part of LexA, leading to derepression of the SOS regulon and eventually DNA repair. The protein is LexA repressor of Burkholderia cenocepacia (strain ATCC BAA-245 / DSM 16553 / LMG 16656 / NCTC 13227 / J2315 / CF5610) (Burkholderia cepacia (strain J2315)).